A 253-amino-acid chain; its full sequence is Homeobox protein EMX2 (253 aa).

Residues 155–214 constitute a DNA-binding region (homeobox); that stretch reads PKRIRTAFSPSQLLRLEHAFEKNHYVVGAERKQLAHSLSLTETQVKVWFQNRRTKFKRQK. Residues 213–253 are disordered; the sequence is QKLEEEGSDSQQKKKGTHHINRWRIATKQASPEEIDVTSDD. A compositionally biased stretch (basic residues) spans 225–234; the sequence is KKKGTHHINR.

It belongs to the EMX homeobox family. In terms of assembly, interacts with translation initiation factor EIF4E.

The protein localises to the nucleus. The protein resides in the cell projection. It is found in the axon. Transcription factor, which in cooperation with EMX1, acts to generate the boundary between the roof and archipallium in the developing brain. May function in combination with OTX1/2 to specify cell fates in the developing central nervous system. In the inner ear, it controls the distribution of GPR156 at hair cell boundaries, and regulates the organization of stereociliary bundles in opposite orientations across the line of polarity reversal (LPR). This Bos taurus (Bovine) protein is Homeobox protein EMX2 (EMX2).